The chain runs to 317 residues: U5 small nuclear ribonucleoprotein TSSC4 (317 aa).

Positions 1-19 are enriched in acidic residues; that stretch reads MAETEAGLEVEEPTEDDTL. The tract at residues 1–78 is disordered; sequence MAETEAGLEV…IPTTAVQPFH (78 aa). A compositionally biased stretch (low complexity) spans 20–37; that stretch reads PSDTVSLSDSDSDLSLPS. Phosphoserine occurs at positions 57, 64, 83, and 92. Positions 74–101 are hom2; mediates interaction with the U5 snRNP complexes and required for spliceosomal tri-snRNP complex assembly; the sequence is VQPFHLRGMSSTFSQRSHSIFDCLESAA. The segment at 123 to 151 is disordered; it reads VAPPSQTPARSLSRVHGNTDPTRVHPVPD. The tract at residues 146-300 is interaction with SNRNP200; sequence VHPVPDYVSH…SKKRSRDHFR (155 aa). The segment at 147–183 is hom3; mediates interaction with the U5 snRNP complexes; the sequence is HPVPDYVSHPERWTKYSLEDVSETSEQSNRDAALAFL. The interval 198–238 is hom4; necessary for interaction with the PRPF19 complex and required for spliceosomal tri-snRNP complex assembly; the sequence is FNQDPSSCGEGRVVFTKPVRGSEARAERKRVLKKGVVSGAG. Lys-214 is subject to N6-acetyllysine. The tract at residues 247–317 is disordered; the sequence is HLAGPEAEEW…GPGSERGPSV (71 aa).

Belongs to the TSSC4 family. Interacts in a RNA-independent manner with distinct U5 snRNP-containing complexes, the mono-U5 snRNP and the post-splicing U5 snRNP-PRPF19 complex. Interacts with SNRNP200; the interaction is direct, excludes recruitment of C9ORF78 and WBP4 to SNRNP200 and negatively regulates its RNA helicase activity. Interacts with PRPF8; the interaction is direct.

It is found in the nucleus. Its subcellular location is the cytoplasm. Its function is as follows. Protein associated with the U5 snRNP, during its maturation and its post-splicing recycling and which is required for spliceosomal tri-snRNP complex assembly in the nucleus. Has a molecular sequestering activity and transiently hinders SNRNP200 binding sites for constitutive splicing factors that intervene later during the assembly of the spliceosome and splicing. Together with its molecular sequestering activity, may also function as a molecular adapter and placeholder, coordinating the assembly of the U5 snRNP and its association with the U4/U6 di-snRNP. The protein is U5 small nuclear ribonucleoprotein TSSC4 of Rattus norvegicus (Rat).